The sequence spans 1154 residues: uncharacterized protein (1154 aa).

The N-terminal stretch at 1 to 18 is a signal peptide; the sequence is MKRNIFIKLLISLLLLSS. Cysteine 19 carries N-palmitoyl cysteine lipidation. Cysteine 19 carries S-diacylglycerol cysteine lipidation. A run of 4 helical transmembrane segments spans residues 288-308, 394-414, 423-443, and 458-478; these read ISVS…FLIG, LGFI…FLIF, ALIT…FMLF, and ISYA…SMII.

This sequence belongs to the TrbL/VirB6 family.

It localises to the cell membrane. This is an uncharacterized protein from Rickettsia typhi (strain ATCC VR-144 / Wilmington).